Consider the following 364-residue polypeptide: Urease accessory protein UreD (364 aa).

Disordered regions lie at residues 1–37 (MDQD…SSPA) and 201–250 (PPEV…AGER). Low complexity-rich tracts occupy residues 21 to 37 (AGSA…SSPA), 209 to 218 (APDRGAPAAE), and 236 to 248 (AASS…APAG).

This sequence belongs to the UreD family. UreD, UreF and UreG form a complex that acts as a GTP-hydrolysis-dependent molecular chaperone, activating the urease apoprotein by helping to assemble the nickel containing metallocenter of UreC. The UreE protein probably delivers the nickel.

The protein resides in the cytoplasm. Functionally, required for maturation of urease via the functional incorporation of the urease nickel metallocenter. In Kocuria rhizophila (strain ATCC 9341 / DSM 348 / NBRC 103217 / DC2201), this protein is Urease accessory protein UreD.